The primary structure comprises 181 residues: Large ribosomal subunit protein uL5c (181 aa).

It belongs to the universal ribosomal protein uL5 family. In terms of assembly, part of the 50S ribosomal subunit; contacts the 5S rRNA.

It is found in the plastid. It localises to the chloroplast. Functionally, binds 5S rRNA, forms part of the central protuberance of the 50S subunit. This is Large ribosomal subunit protein uL5c (rpl5) from Guillardia theta (Cryptophyte).